We begin with the raw amino-acid sequence, 274 residues long: Penicillin-insensitive murein endopeptidase (274 aa).

A signal peptide spans 1–19; it reads MNKTAIALLALLASSASLA. 3 disulfides stabilise this stretch: Cys-44–Cys-265, Cys-187–Cys-235, and Cys-216–Cys-223. Residues His-110, His-113, Asp-120, Asp-147, His-150, and His-211 each coordinate Zn(2+). A disordered region spans residues 227–274; it reads PLPPPGDGCGAELQSWFEPPKPGTTKPEKKTPPPLPPSCQALLDEHVI.

Belongs to the peptidase M74 family. Dimer. Requires Zn(2+) as cofactor.

The protein resides in the periplasm. Murein endopeptidase that cleaves the D-alanyl-meso-2,6-diamino-pimelyl amide bond that connects peptidoglycan strands. Likely plays a role in the removal of murein from the sacculus. The protein is Penicillin-insensitive murein endopeptidase of Escherichia coli (strain ATCC 8739 / DSM 1576 / NBRC 3972 / NCIMB 8545 / WDCM 00012 / Crooks).